We begin with the raw amino-acid sequence, 347 residues long: Olfactory receptor 6J1 (347 aa).

At 1–24 (MGNWTAAVTEFVLLGFSLSREVEL) the chain is on the extracellular side. The N-linked (GlcNAc...) asparagine glycan is linked to Asn3. Residues 25 to 45 (LLLVLLLPTFLLTLLGNLLII) traverse the membrane as a helical segment. The Cytoplasmic segment spans residues 46–53 (STVLSCSR). Residues 54–74 (LHTPMYFFLCNLSILDILFTS) form a helical membrane-spanning segment. The Extracellular segment spans residues 75-98 (VISPKVLANLGSRDKTISFAGCIT). Cys96 and Cys188 are joined by a disulfide. The helical transmembrane segment at 99-119 (QCYFYFFLGTVEFLLLTVMSY) threads the bilayer. Residues 120–138 (DRYATICCPLRYTTIMRPS) are Cytoplasmic-facing. The helical transmembrane segment at 139–159 (VCIGTVVFSWVGGFLSVLFPT) threads the bilayer. The Extracellular portion of the chain corresponds to 160–196 (ILISQLPFCGSNIINHFFCDSGPLLALACADTTAIEL). The chain crosses the membrane as a helical span at residues 197–216 (MDFMLSSMVILCCIVLVAYS). The Cytoplasmic portion of the chain corresponds to 217 to 236 (YTYIILTIVRIPSASGRKKA). Residues 237 to 257 (FNTCASHLTIVIISSGITVFI) form a helical membrane-spanning segment. Topologically, residues 258 to 270 (YVTPSQKEYLEIN) are extracellular. A helical membrane pass occupies residues 271–291 (KIPLVLSSVVTPFLNPFIYTL). Residues 292–347 (RNDTVQGVLRDVWVRVRGVFEKRMRAVLRSRLSSNKDHQGRACSSPPCVYSVKLQC) lie on the Cytoplasmic side of the membrane.

The protein belongs to the G-protein coupled receptor 1 family.

Its subcellular location is the cell membrane. Its function is as follows. Odorant receptor. This Homo sapiens (Human) protein is Olfactory receptor 6J1 (OR6J1).